We begin with the raw amino-acid sequence, 111 residues long: Putative carnobacteriocin-B2 immunity protein (111 aa).

Its function is as follows. Could impart immunity to carnobacteriocin-B2 to naturally sensitive host strains. The sequence is that of Putative carnobacteriocin-B2 immunity protein from Carnobacterium maltaromaticum (Carnobacterium piscicola).